The primary structure comprises 368 residues: MDKHTPLLPGDSVFSRCKTEDSRIKGYDPVISPALIQSELAASDETLAFVSDQRRQAADIIAGRDDRLLLIVGPCSLHDPVAAKEYAIRLQKEAIKHKKDLHIIMRAYLEKPRTTVGWKGLINDPDLDGSYNINKGIRVARRIFLELLETGVGIASEMLDTISPQYLADLICWGAIGARTTESQLHRELASGLSFPIGFKNATDGNIGIAIDAMNSSANPHHFLSVTKQGVVAIVTTTGNPDTHIILRGGKSGTNFDADSVAGAKAKLEECNKLPSIMIDCSHGNSSKNHKNQPKVAACIAEQVANGQKAITGVMIESHLNEGKQAIPEDDLSSMKYGVSVTDACIGWDDTTAVFEQLAAAVRSRRSH.

It belongs to the class-I DAHP synthase family.

The catalysed reaction is D-erythrose 4-phosphate + phosphoenolpyruvate + H2O = 7-phospho-2-dehydro-3-deoxy-D-arabino-heptonate + phosphate. The protein operates within metabolic intermediate biosynthesis; chorismate biosynthesis; chorismate from D-erythrose 4-phosphate and phosphoenolpyruvate: step 1/7. In terms of biological role, stereospecific condensation of phosphoenolpyruvate (PEP) and D-erythrose-4-phosphate (E4P) giving rise to 3-deoxy-D-arabino-heptulosonate-7-phosphate (DAHP). The polypeptide is Putative phospho-2-dehydro-3-deoxyheptonate aldolase (Schizosaccharomyces pombe (strain 972 / ATCC 24843) (Fission yeast)).